The chain runs to 394 residues: GDSL esterase/lipase At1g31550 (394 aa).

The signal sequence occupies residues 1–27; it reads MASLDSHVLMKLGSLFLSTLFVSIVSS. Ser-43 acts as the Nucleophile in catalysis. 3 N-linked (GlcNAc...) asparagine glycosylation sites follow: Asn-138, Asn-290, and Asn-322. Residues Asp-345 and His-348 contribute to the active site.

Belongs to the 'GDSL' lipolytic enzyme family.

The protein resides in the secreted. This Arabidopsis thaliana (Mouse-ear cress) protein is GDSL esterase/lipase At1g31550.